We begin with the raw amino-acid sequence, 223 residues long: Oxaloacetate tautomerase FAHD1, mitochondrial (223 aa).

The N-terminal 30 residues, 1–30 (MATSMIQRMFKQGTKIVCVGRNYAAHAKEL), are a transit peptide targeting the mitochondrion. 3 residues coordinate Mg(2+): glutamate 67, glutamate 69, and aspartate 98.

The protein belongs to the FAH family. Requires Mg(2+) as cofactor. It depends on Mn(2+) as a cofactor.

The protein localises to the mitochondrion. The enzyme catalyses oxaloacetate = enol-oxaloacetate. In terms of biological role, tautomerase that converts enol-oxaloacetate, a strong inhibitor of succinate dehydrogenase, to the physiological keto form of oxaloacetate. This is Oxaloacetate tautomerase FAHD1, mitochondrial from Arabidopsis thaliana (Mouse-ear cress).